Here is a 262-residue protein sequence, read N- to C-terminus: Probable carboxylesterase Culp3 (262 aa).

A signal peptide spans 1 to 41 (MNNRPIRLLTSGRAGLGAGALITAVVLLIALGAVWTPVAFA). Cys44 and Cys114 are disulfide-bonded. The active-site Nucleophile is Ser125. An intrachain disulfide couples Cys188 to Cys195. Asp192 is an active-site residue. The active-site Proton donor/acceptor is His206. The interval 241-262 (LPGSVLQMPGTAAPAPESLHGR) is disordered.

It belongs to the cutinase family.

It is found in the secreted. In terms of biological role, shows weak esterase activity with the p-nitrophenol-linked aliphatic ester pNP-butyrate. Does not exhibit cutinase activity. This chain is Probable carboxylesterase Culp3 (cut3), found in Mycobacterium tuberculosis (strain ATCC 25618 / H37Rv).